The sequence spans 197 residues: RILP-like protein 2 (197 aa).

Residues 1–24 form a disordered region; sequence MEDHPVREEEDGEEDEGALAKSPL. The segment covering 8 to 17 has biased composition (acidic residues); sequence EEEDGEEDEG. In terms of domain architecture, RH1 spans 14 to 96; that stretch reads EDEGALAKSP…KQEVEGLRKA (83 aa). A coiled-coil region spans residues 69 to 153; that stretch reads VNEGSLAVEE…VQEELQCYRS (85 aa). The 66-residue stretch at 119–184 folds into the RH2 domain; that stretch reads RPRFTLQELR…GNGEKEERTI (66 aa).

It belongs to the RILPL family. In terms of assembly, homodimer. Interacts with RAC1. Interacts (via N-terminus) with MYO5A, the interaction is required for its role in dendrite formation. Interacts with RAB8A; interaction is dependent on the phosphorylation of RAB8A on 'Thr-72'. Interacts with RAB10 and RAB12; interaction is dependent on the phosphorylation of 'Thr-73' on RAB10 and 'Ser-105' on RAB12.

The protein resides in the cytoplasm. It localises to the cytosol. It is found in the cytoskeleton. Its subcellular location is the microtubule organizing center. The protein localises to the centrosome. The protein resides in the cell projection. It localises to the cilium. In terms of biological role, involved in cell shape and neuronal morphogenesis, positively regulating the establishment and maintenance of dendritic spines. Plays a role in cellular protein transport, including protein transport away from primary cilia. May function via activation of RAC1 and PAK1. In Mus musculus (Mouse), this protein is RILP-like protein 2 (Rilpl2).